Reading from the N-terminus, the 304-residue chain is Small ribosomal subunit biogenesis GTPase RsgA (304 aa).

The 160-residue stretch at 70–229 folds into the CP-type G domain; it reads HNELNRPNIA…IADTPGFSKL (160 aa). GTP is bound by residues 119–122 and 172–180; these read TKID and GQTGVGKST. Zn(2+) is bound by residues cysteine 253, cysteine 259, histidine 261, and cysteine 267.

The protein belongs to the TRAFAC class YlqF/YawG GTPase family. RsgA subfamily. As to quaternary structure, monomer. Associates with 30S ribosomal subunit, binds 16S rRNA. It depends on Zn(2+) as a cofactor.

The protein localises to the cytoplasm. Functionally, one of several proteins that assist in the late maturation steps of the functional core of the 30S ribosomal subunit. Helps release RbfA from mature subunits. May play a role in the assembly of ribosomal proteins into the subunit. Circularly permuted GTPase that catalyzes slow GTP hydrolysis, GTPase activity is stimulated by the 30S ribosomal subunit. In Phytoplasma mali (strain AT), this protein is Small ribosomal subunit biogenesis GTPase RsgA.